We begin with the raw amino-acid sequence, 185 residues long: Ribosome-recycling factor (185 aa).

It belongs to the RRF family.

It is found in the cytoplasm. In terms of biological role, responsible for the release of ribosomes from messenger RNA at the termination of protein biosynthesis. May increase the efficiency of translation by recycling ribosomes from one round of translation to another. The protein is Ribosome-recycling factor of Shewanella sp. (strain W3-18-1).